We begin with the raw amino-acid sequence, 449 residues long: Bifunctional protein GlmU (449 aa).

The segment at 1-226 (MNNIHAIILA…KFEVLGVNDK (226 aa)) is pyrophosphorylase. Residues 9-12 (LAAG), K23, Q73, 78-79 (GT), 100-102 (YGD), G137, E151, N166, and N224 each bind UDP-N-acetyl-alpha-D-glucosamine. A Mg(2+)-binding site is contributed by D102. N224 contacts Mg(2+). The linker stretch occupies residues 227–247 (VQLAELERLFQKDQAIQFMKQ). An N-acetyltransferase region spans residues 248–449 (GLGLKDPTRF…QKNLKYRSKK (202 aa)). 2 residues coordinate UDP-N-acetyl-alpha-D-glucosamine: R330 and K348. The Proton acceptor role is filled by H360. Y363 and N374 together coordinate UDP-N-acetyl-alpha-D-glucosamine. Acetyl-CoA is bound by residues A377, 383-384 (NY), S402, A420, and R437.

This sequence in the N-terminal section; belongs to the N-acetylglucosamine-1-phosphate uridyltransferase family. It in the C-terminal section; belongs to the transferase hexapeptide repeat family. As to quaternary structure, homotrimer. Requires Mg(2+) as cofactor.

Its subcellular location is the cytoplasm. It catalyses the reaction alpha-D-glucosamine 1-phosphate + acetyl-CoA = N-acetyl-alpha-D-glucosamine 1-phosphate + CoA + H(+). The enzyme catalyses N-acetyl-alpha-D-glucosamine 1-phosphate + UTP + H(+) = UDP-N-acetyl-alpha-D-glucosamine + diphosphate. It participates in nucleotide-sugar biosynthesis; UDP-N-acetyl-alpha-D-glucosamine biosynthesis; N-acetyl-alpha-D-glucosamine 1-phosphate from alpha-D-glucosamine 6-phosphate (route II): step 2/2. It functions in the pathway nucleotide-sugar biosynthesis; UDP-N-acetyl-alpha-D-glucosamine biosynthesis; UDP-N-acetyl-alpha-D-glucosamine from N-acetyl-alpha-D-glucosamine 1-phosphate: step 1/1. Its pathway is bacterial outer membrane biogenesis; LPS lipid A biosynthesis. In terms of biological role, catalyzes the last two sequential reactions in the de novo biosynthetic pathway for UDP-N-acetylglucosamine (UDP-GlcNAc). The C-terminal domain catalyzes the transfer of acetyl group from acetyl coenzyme A to glucosamine-1-phosphate (GlcN-1-P) to produce N-acetylglucosamine-1-phosphate (GlcNAc-1-P), which is converted into UDP-GlcNAc by the transfer of uridine 5-monophosphate (from uridine 5-triphosphate), a reaction catalyzed by the N-terminal domain. In Vesicomyosocius okutanii subsp. Calyptogena okutanii (strain HA), this protein is Bifunctional protein GlmU.